A 546-amino-acid polypeptide reads, in one-letter code: Chaperonin GroEL (546 aa).

ATP is bound by residues T29–P32, K50, D86–T90, G414, and D492.

Belongs to the chaperonin (HSP60) family. As to quaternary structure, forms a cylinder of 14 subunits composed of two heptameric rings stacked back-to-back. Interacts with the co-chaperonin GroES.

It localises to the cytoplasm. The catalysed reaction is ATP + H2O + a folded polypeptide = ADP + phosphate + an unfolded polypeptide.. In terms of biological role, together with its co-chaperonin GroES, plays an essential role in assisting protein folding. The GroEL-GroES system forms a nano-cage that allows encapsulation of the non-native substrate proteins and provides a physical environment optimized to promote and accelerate protein folding. This is Chaperonin GroEL from Helicobacter pylori (strain P12).